We begin with the raw amino-acid sequence, 2109 residues long: Nonribosomal peptide synthetase sidE (2109 aa).

The tract at residues 31-512 is adenylation 1; the sequence is LTPPSPPCLV…QNGKVDFRAI (482 aa). One can recognise a Carrier 1 domain in the interval 537-613; it reads AGLSETASKI…EIADTVQLDS (77 aa). Residue serine 574 is modified to O-(pantetheine 4'-phosphoryl)serine. Residues 646–908 form a condensation 1 region; the sequence is DAYPVTALQE…LAVVPYAIAI (263 aa). The tract at residues 1058 to 1555 is adenylation 2; sequence RTLNGQFEAT…GKANRKQLKA (498 aa). The Carrier 2 domain maps to 1584–1660; it reads PLASETQKVL…AMADQLKGES (77 aa). Serine 1621 carries the post-translational modification O-(pantetheine 4'-phosphoryl)serine. The segment at 1695–1968 is condensation 2; that stretch reads YPCPPGQAEF…NFLPMRSKVD (274 aa).

Belongs to the NRP synthetase family.

The protein operates within siderophore biosynthesis. Nonribosomal peptide synthetase; part of the siderophore biosynthetic pathway. Aspergillus fumigatus produces four types of siderophores, low-molecular-mass iron chelators, including excreted fusarinine C (FsC) and triacetylfusarinine C (TAFC) for iron uptake and intacellular ferricrocin (FC) for hyphal and hydroxyferricrocin (HFC) for conidial iron distribution and storage. TAFC consists of three N(2)-acetyl-N(5)-anhydromevalonyl-N(5)-hydroxyornithine residues cyclically linked by ester bonds; FC is a cyclic hexapeptide with the structure Gly-Ser-Gly-(N(5)-acetyl-N(5)-hydroxyornithine)x3. The biosynthesis of all four siderophores depends on the hydroxylation of ornithine, catalyzed by the monooxygenase sidA. Subsequently, the pathways for biosynthesis of extra- and intracellular siderophores split. For biosynthesis of extracellular siderophores, the transacylase sidF transfers anhydromevalonyl to N(5)-hydroxyornithine. The required anhydromevalonyl-CoA moiety is derived from mevalonate by CoA ligation and dehydration catalyzed by sidI and sidH respectively. The acetylation of N(5)-hydroxyornithine for FC biosynthesis involves the constitutively expressed sidL. FC is hydroxylated to HFC by an as yet uncharacterized enzyme during conidiation. Assembly of fusarinine C (FsC) and FC is catalyzed by two different nonribosomal peptide synthetases (NRPS), sidD and sidC respectively. Subsequently, sidG catalyzes N2-acetylation of FsC for forming TAFC. Both extra- and intracellular siderophores are crucial for growth during iron limitation and virulence. The chain is Nonribosomal peptide synthetase sidE from Aspergillus fumigatus (strain ATCC MYA-4609 / CBS 101355 / FGSC A1100 / Af293) (Neosartorya fumigata).